Reading from the N-terminus, the 581-residue chain is MKSHIQSLLEQTLESFKQQGIVPADFEARIQVDRTKDKSHGDLATNLAMMLTKVAGKNPRELAQLIIDTLPASAYVAKVEIAGPGFINFFINDSALADQLQNAVNDEHLGIKLPTPQTVVVDYSSPNLAKEMHVGHLRSTIIGDSVVRALEFLGHKVIRQNHVGDWGTQFGMLLAYMEELRAKNGEKAQLELSDLENFYRAAKLRFDESAEFATRARQLVVELQSGDEYCNKLWREFNDISLSHCHEVYARLGVSLTRADVHGESAYNADLEQVVKDLDAQGLLTESNGAKVVFQEAFRNKEGEPLPVIIQKADGGYLYATSDLAAMRYRSNVLKADRVLYFVDLRQALHFQQVFSLAKLAKFVREDMSLEHLGFGTMNGEDGRPFKTRSGGVVKLVDLLEEANVRALELVRSKNPDMDEATLTEIARVVGISAVKYADLSKNRTSDYIFSFEQMLSFEGNTAPYLLYAYTRVAGIFKRVTDLDLSQAKIVLEHEKEKDLGNKLAQFGEILSRVVDKGQPHVLCAYLYELAGAFSSFYEACPVLAADNDAQKNSRLLLAQLTARTLQKGLNLLGIETLERM.

The 'HIGH' region motif lies at 126–136 (PNLAKEMHVGH).

The protein belongs to the class-I aminoacyl-tRNA synthetase family. Monomer.

It is found in the cytoplasm. It carries out the reaction tRNA(Arg) + L-arginine + ATP = L-arginyl-tRNA(Arg) + AMP + diphosphate. The sequence is that of Arginine--tRNA ligase from Shewanella baltica (strain OS155 / ATCC BAA-1091).